The following is a 177-amino-acid chain: Large ribosomal subunit protein uL6 (177 aa).

This sequence belongs to the universal ribosomal protein uL6 family. In terms of assembly, part of the 50S ribosomal subunit.

This protein binds to the 23S rRNA, and is important in its secondary structure. It is located near the subunit interface in the base of the L7/L12 stalk, and near the tRNA binding site of the peptidyltransferase center. The sequence is that of Large ribosomal subunit protein uL6 from Haemophilus ducreyi (strain 35000HP / ATCC 700724).